Reading from the N-terminus, the 323-residue chain is NAC transcription factor 25 (323 aa).

An NAC domain is found at 16-177 (LPPGFRFHPT…DWVLCRIYKK (162 aa)). A DNA-binding region spans residues 114–183 (VGVKKALVFY…IYKKNSSQRP (70 aa)). Over residues 201 to 221 (KSSANSSSTSVLDNNDNNNNN) the composition is skewed to low complexity. A disordered region spans residues 201–223 (KSSANSSSTSVLDNNDNNNNNNE).

As to expression, expressed specifically in the tapetum.

The protein localises to the nucleus. Transcription factor of the NAC family. May be associated with anther development and pollen production. Required for normal seed development and morphology. This chain is NAC transcription factor 25 (NAC025), found in Arabidopsis thaliana (Mouse-ear cress).